The following is a 472-amino-acid chain: Siroheme synthase (472 aa).

The precorrin-2 dehydrogenase /sirohydrochlorin ferrochelatase stretch occupies residues 1 to 203 (MNYLPIFIDI…GKIQEAKADL (203 aa)). NAD(+) contacts are provided by residues 22-23 (DI) and 43-44 (KS). S128 carries the post-translational modification Phosphoserine. The segment at 216 to 472 (GEVYLVGGGP…SSKKSYLFGG (257 aa)) is uroporphyrinogen-III C-methyltransferase. S-adenosyl-L-methionine is bound at residue P225. D248 acts as the Proton acceptor in catalysis. K270 (proton donor) is an active-site residue. S-adenosyl-L-methionine-binding positions include 301–303 (GGD), I306, 331–332 (TA), M383, and G412.

In the N-terminal section; belongs to the precorrin-2 dehydrogenase / sirohydrochlorin ferrochelatase family. The protein in the C-terminal section; belongs to the precorrin methyltransferase family.

It carries out the reaction uroporphyrinogen III + 2 S-adenosyl-L-methionine = precorrin-2 + 2 S-adenosyl-L-homocysteine + H(+). It catalyses the reaction precorrin-2 + NAD(+) = sirohydrochlorin + NADH + 2 H(+). The catalysed reaction is siroheme + 2 H(+) = sirohydrochlorin + Fe(2+). It participates in cofactor biosynthesis; adenosylcobalamin biosynthesis; precorrin-2 from uroporphyrinogen III: step 1/1. It functions in the pathway cofactor biosynthesis; adenosylcobalamin biosynthesis; sirohydrochlorin from precorrin-2: step 1/1. The protein operates within porphyrin-containing compound metabolism; siroheme biosynthesis; precorrin-2 from uroporphyrinogen III: step 1/1. Its pathway is porphyrin-containing compound metabolism; siroheme biosynthesis; siroheme from sirohydrochlorin: step 1/1. It participates in porphyrin-containing compound metabolism; siroheme biosynthesis; sirohydrochlorin from precorrin-2: step 1/1. Functionally, multifunctional enzyme that catalyzes the SAM-dependent methylations of uroporphyrinogen III at position C-2 and C-7 to form precorrin-2 via precorrin-1. Then it catalyzes the NAD-dependent ring dehydrogenation of precorrin-2 to yield sirohydrochlorin. Finally, it catalyzes the ferrochelation of sirohydrochlorin to yield siroheme. This is Siroheme synthase from Ruthia magnifica subsp. Calyptogena magnifica.